An 80-amino-acid chain; its full sequence is Cell division activator CedA (80 aa).

This sequence belongs to the CedA family.

In terms of biological role, activates the cell division inhibited by chromosomal DNA over-replication. This chain is Cell division activator CedA, found in Salmonella arizonae (strain ATCC BAA-731 / CDC346-86 / RSK2980).